A 490-amino-acid chain; its full sequence is Myocilin (490 aa).

Residues 1-18 form the signal peptide; it reads MPATQLLLLACLVWGLGA. The N-linked (GlcNAc...) asparagine glycan is linked to N43. Residues 52 to 169 adopt a coiled-coil conformation; the sequence is QAMSAIQDLQ…SQEVARLRRG (118 aa). The segment covering 146–157 has biased composition (basic and acidic residues); it reads REENEDLARRLD. The segment at 146-188 is disordered; the sequence is REENEDLARRLDSSSQEVARLRRGQCPQARGTPQDVPSGSREV. Positions 230 to 489 constitute an Olfactomedin-like domain; the sequence is GCGELVWVGE…MVTYDLRLSE (260 aa). A disulfide bridge links C231 with C419. Residues D366, N414, A415, V463, and D464 each coordinate Ca(2+). Residues 488–490 carry the Microbody targeting signal motif; the sequence is SEM.

As to quaternary structure, homodimer (via N-terminus). Can also form higher oligomers. Interacts with OLFM3, FN1, NRCAM, GLDN and NFASC. Interacts (via N-terminus) with MYL2. Interacts with SFRP1, FRZB, FZD7, FZD10, FZD1 and WIF1; regulates Wnt signaling. Interacts with SNTA1; regulates muscle hypertrophy. Interacts with ERBB2 and ERBB3; activates ERBB2-ERBB3 signaling pathway. Interacts with SNCG; affects its secretion and its aggregation. In terms of processing, palmitoylated. Undergoes a calcium-dependent proteolytic cleavage at Arg-212 by CAPN2 in the endoplasmic reticulum. The result is the production of two fragments, one of 35 kDa containing the C-terminal olfactomedin-like domain, and another of 20 kDa containing the N-terminal leucine zipper-like domain. Post-translationally, glycosylated. In terms of tissue distribution, expressed in optic nerve head, ciliary body and retina.

The protein resides in the secreted. It localises to the golgi apparatus. It is found in the cytoplasmic vesicle. The protein localises to the extracellular space. Its subcellular location is the extracellular matrix. The protein resides in the extracellular exosome. It localises to the mitochondrion. It is found in the mitochondrion intermembrane space. The protein localises to the mitochondrion inner membrane. Its subcellular location is the mitochondrion outer membrane. The protein resides in the rough endoplasmic reticulum. It localises to the cell projection. It is found in the cilium. The protein localises to the endoplasmic reticulum. Secreted glycoprotein regulating the activation of different signaling pathways in adjacent cells to control different processes including cell adhesion, cell-matrix adhesion, cytoskeleton organization and cell migration. Promotes substrate adhesion, spreading and formation of focal contacts. Negatively regulates cell-matrix adhesion and stress fiber assembly through Rho protein signal transduction. Modulates the organization of actin cytoskeleton by stimulating the formation of stress fibers through interactions with components of Wnt signaling pathways. Promotes cell migration through activation of PTK2 and the downstream phosphatidylinositol 3-kinase signaling. Plays a role in bone formation and promotes osteoblast differentiation in a dose-dependent manner through mitogen-activated protein kinase signaling. Mediates myelination in the peripheral nervous system through ERBB2/ERBB3 signaling. Plays a role as a regulator of muscle hypertrophy through the components of dystrophin-associated protein complex. Involved in positive regulation of mitochondrial depolarization. Plays a role in neurite outgrowth. May participate in the obstruction of fluid outflow in the trabecular meshwork. In Felis catus (Cat), this protein is Myocilin (MYOC).